The chain runs to 27 residues: Toxin Bcg III 21.00 (27 aa).

Its subcellular location is the secreted. The protein resides in the nematocyst. Possible voltage-gated potassium channel (Kv) blocker. In Bunodosoma cangicum (Sea anemone), this protein is Toxin Bcg III 21.00.